Reading from the N-terminus, the 167-residue chain is Phosphopantetheine adenylyltransferase (167 aa).

Thr-10 contributes to the substrate binding site. ATP is bound by residues 10 to 11 and His-18; that span reads TF. Residues Ala-77 and Arg-91 each coordinate substrate. ATP is bound by residues 92–94, Glu-102, and 127–133; these read GLR and YSFISSS.

This sequence belongs to the bacterial CoaD family. In terms of assembly, homohexamer. Mg(2+) serves as cofactor.

It localises to the cytoplasm. It carries out the reaction (R)-4'-phosphopantetheine + ATP + H(+) = 3'-dephospho-CoA + diphosphate. It functions in the pathway cofactor biosynthesis; coenzyme A biosynthesis; CoA from (R)-pantothenate: step 4/5. In terms of biological role, reversibly transfers an adenylyl group from ATP to 4'-phosphopantetheine, yielding dephospho-CoA (dPCoA) and pyrophosphate. The polypeptide is Phosphopantetheine adenylyltransferase (Thermomicrobium roseum (strain ATCC 27502 / DSM 5159 / P-2)).